Reading from the N-terminus, the 489-residue chain is 3-octaprenyl-4-hydroxybenzoate carboxy-lyase (489 aa).

Asn172 provides a ligand contact to Mn(2+). Prenylated FMN contacts are provided by residues 175-177, 189-191, and 194-195; these read IYR, RWL, and RG. A Mn(2+)-binding site is contributed by Glu238. Asp287 serves as the catalytic Proton donor.

The protein belongs to the UbiD family. As to quaternary structure, homohexamer. The cofactor is prenylated FMN. Mn(2+) is required as a cofactor.

It localises to the cell membrane. The enzyme catalyses a 4-hydroxy-3-(all-trans-polyprenyl)benzoate + H(+) = a 2-(all-trans-polyprenyl)phenol + CO2. The protein operates within cofactor biosynthesis; ubiquinone biosynthesis. Functionally, catalyzes the decarboxylation of 3-octaprenyl-4-hydroxy benzoate to 2-octaprenylphenol, an intermediate step in ubiquinone biosynthesis. The protein is 3-octaprenyl-4-hydroxybenzoate carboxy-lyase of Salmonella paratyphi B (strain ATCC BAA-1250 / SPB7).